The sequence spans 306 residues: Ribonuclease H2 subunit B (306 aa).

The tract at residues 232–285 is disordered; sequence LPDLSSPTPEPPVKKRKVSEAPVEAEEDYTKFNSDSKNKKSNSKMTAAQKSLAK. The span at 259–269 shows a compositional bias: basic and acidic residues; sequence DYTKFNSDSKN.

The protein belongs to the RNase H2 subunit B family. In terms of assembly, the RNase H2 complex is a heterotrimer composed of the catalytic subunit rnaseh2a and the non-catalytic subunits rnaseh2b and rnaseh2c.

The protein resides in the nucleus. In terms of biological role, non catalytic subunit of RNase H2, an endonuclease that specifically degrades the RNA of RNA:DNA hybrids. Participates in DNA replication, possibly by mediating the removal of lagging-strand Okazaki fragment RNA primers during DNA replication. Mediates the excision of single ribonucleotides from DNA:RNA duplexes. This chain is Ribonuclease H2 subunit B (rnaseh2b), found in Xenopus tropicalis (Western clawed frog).